The following is a 76-amino-acid chain: Small ribosomal subunit protein bS18 (76 aa).

The protein belongs to the bacterial ribosomal protein bS18 family. Part of the 30S ribosomal subunit. Forms a tight heterodimer with protein bS6.

Binds as a heterodimer with protein bS6 to the central domain of the 16S rRNA, where it helps stabilize the platform of the 30S subunit. The polypeptide is Small ribosomal subunit protein bS18 (Pseudomonas fluorescens (strain ATCC BAA-477 / NRRL B-23932 / Pf-5)).